A 2603-amino-acid polypeptide reads, in one-letter code: Ankyrin repeat domain-containing protein 17 (2603 aa).

The residue at position 1 (methionine 1) is an N-acetylmethionine. Residues 1 to 32 (MEKATVPAAAEGEGSPPAAAAVAAPPAAAAAE) are compositionally biased toward low complexity. The disordered stretch occupies residues 1 to 127 (MEKATVPAAA…DDDEEEEVSE (127 aa)). Phosphoserine occurs at positions 15 and 42. The span at 68–77 (PHHKAKRNRT) shows a compositional bias: basic residues. The span at 82 to 92 (SSSESSSDSDN) shows a compositional bias: low complexity. Gly residues predominate over residues 93 to 107 (SGGGGGGGGGGGGGT). The segment covering 112–127 (SEEEEDDDDEEEEVSE) has biased composition (acidic residues). Serine 152 bears the Phosphoserine mark. 15 ANK repeats span residues 229-258 (SDNR…SVNE), 262-291 (EGES…NVED), 296-325 (GDIT…DVNA), 329-358 (TGNT…SIED), 362-391 (NGHT…GINT), 396-425 (FKES…DQEH), 429-458 (EMHT…QVNM), 462-491 (SFES…SLEE), 495-524 (EGYT…NINA), 529-558 (TQET…DIEL), 559-588 (GCST…NVHA), 592-621 (TGDT…DLEH), 625-654 (GGRT…NVNR), 659-688 (NDHT…DPTH), and 692-721 (DGST…NLLA). Lysine 314 participates in a covalent cross-link: Glycyl lysine isopeptide (Lys-Gly) (interchain with G-Cter in SUMO2). The disordered stretch occupies residues 770–792 (VRSKAASKQKSNSHLPANSQDVQ). Residues 775-792 (ASKQKSNSHLPANSQDVQ) are compositionally biased toward polar residues. Serine 799 carries the phosphoserine modification. ANK repeat units lie at residues 1078–1107 (NHDT…SIEH), 1111–1140 (KGFT…DIEA), 1145–1174 (TKDT…NKEH), 1178–1207 (SDYT…EINS), 1213–1242 (LGIS…DINA), 1247–1276 (NRNT…NVEH), 1280–1309 (TGLT…DVNA), 1315–1344 (SRDT…HIDV), 1348–1377 (KGNT…DVDA), and 1381–1410 (RKIT…QFPS). The stretch at 1438-1522 (VQAKDRQAAE…EKEKLKVEEE (85 aa)) forms a coiled coil. Serine 1453 bears the Phosphoserine mark. 2 disordered regions span residues 1475–1496 (AKRE…RKLE) and 1513–1713 (EKEK…PKRE). Residues 1477–1487 (REKRKEKRRKK) show a composition bias toward basic residues. 3 stretches are compositionally biased toward low complexity: residues 1526 to 1546 (LTEP…TWTT), 1598 to 1607 (ESKSSSTSES), and 1616 to 1636 (SSCS…NHAS). Residue serine 1631 is modified to Phosphoserine. 2 stretches are compositionally biased toward polar residues: residues 1638–1648 (VVTTTMASKKQ) and 1671–1699 (LSET…SPNG). Phosphoserine is present on residues serine 1692, serine 1696, and serine 1705. The region spanning 1721–1785 (RRSKKVSVPS…ESTRQATQLI (65 aa)) is the KH domain. Arginine 1870 is subject to Asymmetric dimethylarginine. 3 disordered regions span residues 1902 to 1991 (PRLP…PSVR), 2007 to 2195 (TTVT…SSSA), and 2269 to 2327 (VSSQ…YGSV). Composition is skewed to low complexity over residues 1946–1989 (SNQN…SSPS) and 2007–2024 (TTVT…TNAT). 6 positions are modified to phosphoserine: serine 2038, serine 2040, serine 2041, serine 2043, serine 2055, and serine 2063. 3 stretches are compositionally biased toward low complexity: residues 2068–2077 (ASASEQEASS), 2087–2108 (RPPH…QQPP), and 2175–2189 (PPSH…TPAP). Positions 2269 to 2298 (VSSQSTPESMLSGKSSYLPNSDPLHQSDTS) are enriched in polar residues. A compositionally biased stretch (pro residues) spans 2303 to 2313 (FRPPLQRPAPS). Phosphoserine is present on serine 2373. Residues 2378-2447 (LTPCSSASNE…TGTSAPSVIG (70 aa)) are disordered. Residues 2379 to 2391 (TPCSSASNESPAQ) are compositionally biased toward polar residues. A compositionally biased stretch (low complexity) spans 2392 to 2411 (SVSSGVRAPSPAPSSVPLGS). Position 2401 is a phosphoserine (serine 2401). A compositionally biased stretch (polar residues) spans 2435–2447 (IRQTGTSAPSVIG).

Interacts (via N-terminus) with NOD2. Interacts with CDK2, MCM3, MCM5, MCM7, CDC6 and PCNA. Interacts with MAVS and IFIH1. Interacts (via the second ankyrin repeat cluster) with RIGI. Phosphorylated by CDK2. Highly expressed in fetal liver. Detected in adult liver cells, ovarian oocytes, seminiferous tubules of the testes and pelvic region of the kidney. It was not detected in heart, gut, lung, spleen and skeletal muscle. Earliest specific in situ marker of hepatic differentiation during embryogenesis, useful for characterization of inductive events involved in hepatic specification.

It is found in the cytoplasm. It localises to the nucleus. Could play pivotal roles in cell cycle and DNA regulation. Involved in innate immune defense against viruse by positively regulating the viral dsRNA receptors RIGI and IFIH1 signaling pathways. Involves in NOD2- and NOD1-mediated responses to bacteria suggesting a role in innate antibacterial immune pathways too. Could play a central role for the formation and/or maintenance of the blood vessels of the circulation system. In Mus musculus (Mouse), this protein is Ankyrin repeat domain-containing protein 17 (Ankrd17).